A 110-amino-acid polypeptide reads, in one-letter code: Large ribosomal subunit protein uL22 (110 aa).

This sequence belongs to the universal ribosomal protein uL22 family. As to quaternary structure, part of the 50S ribosomal subunit.

This protein binds specifically to 23S rRNA; its binding is stimulated by other ribosomal proteins, e.g. L4, L17, and L20. It is important during the early stages of 50S assembly. It makes multiple contacts with different domains of the 23S rRNA in the assembled 50S subunit and ribosome. In terms of biological role, the globular domain of the protein is located near the polypeptide exit tunnel on the outside of the subunit, while an extended beta-hairpin is found that lines the wall of the exit tunnel in the center of the 70S ribosome. In Bdellovibrio bacteriovorus (strain ATCC 15356 / DSM 50701 / NCIMB 9529 / HD100), this protein is Large ribosomal subunit protein uL22.